The sequence spans 898 residues: Vacuolar protein sorting-associated protein 41 homolog (898 aa).

Residues methionine 1–glutamate 10 show a composition bias toward basic and acidic residues. A disordered region spans residues methionine 1–glutamate 35. One copy of the CHCR repeat lies at leucine 614–glutamine 756. The RING-type; atypical zinc-finger motif lies at cysteine 835 to serine 890.

The protein belongs to the VPS41 family. In terms of assembly, probable component of the homotypic fusion and vacuole protein sorting (HOPS) complex consisting of the core class C Vps proteins vps-11, vps-16, vps-18, and which further associates with vps-33.1, vps-39 and vps-41.

It is found in the endosome membrane. Its subcellular location is the late endosome. It localises to the lysosome. The protein localises to the golgi apparatus. The protein resides in the trans-Golgi network. It is found in the early endosome. Its subcellular location is the cytoplasmic vesicle. It localises to the clathrin-coated vesicle. Its function is as follows. Plays a role in vesicle-mediated protein trafficking to lysosomal compartments including the endocytic membrane transport pathways. Believed to act in part as a core component of the putative HOPS endosomal tethering complex which is proposed to be involved in the rab-5-to-rab-7 endosome conversion probably implicating sand-1, and via binding SNAREs and SNARE complexes to mediate tethering and docking events during SNARE-mediated membrane fusion. The HOPS complex is proposed to be recruited to rab-7 on the late endosomal membrane and to regulate late endocytic, phagocytic and autophagic traffic towards lysosomes. Within the HOPS complex, contributes to the normal development of gut granules in the adult intestine. May mediate the tethering of autophagosomes with lysosomes. Has a role in the negative regulation of apoptosis. Required for uptake of exogenous dsRNA which is used in experimental RNA silencing. This Caenorhabditis briggsae protein is Vacuolar protein sorting-associated protein 41 homolog.